The chain runs to 432 residues: MGNNVVVLGTQWGDEGKGKIVDLLTERAKYVVRYQGGHNAGHTLVINGEKTVLHLIPSGILRENVTSIIGNGVVLSPAALMKEMKELEDRGIPVRERLLLSEACPLILDYHVALDNAREKARGAKAIGTTGRGIGPAYEDKVARRGLRVGDLFDKETFAEKLKEVMEYHNFQLVNYYKVEAVDYQKVLDDTMAVADILTSMVVDVSDLLDQARQRGDFVMFEGAQGTLLDIDHGTYPYVTSSNTTAGGVATGSGLGPRYVDYVLGILKAYSTRVGAGPFPTELFDETGEFLCKQGNEYGATTGRRRRTGWLDTVAVRRAVQLNSLSGFCLTKLDVLDGLKEVKLCVAYRMPDGREVTTTPLAADDWKGVEPIYETMPGWSESTFGVKDRSGLPQAALNYIKRIEELTGVPIDIISTGPDRTETMILRDPFDA.

Residues 13-19 (GDEGKGK) and 41-43 (GHT) contribute to the GTP site. The active-site Proton acceptor is the Asp14. The Mg(2+) site is built by Asp14 and Gly41. IMP is bound by residues 14-17 (DEGK), 39-42 (NAGH), Thr130, Arg144, Gln225, Thr240, and Arg304. Catalysis depends on His42, which acts as the Proton donor. Residue 300 to 306 (ATTGRRR) coordinates substrate. GTP is bound by residues Arg306, 332 to 334 (KLD), and 415 to 417 (STG).

The protein belongs to the adenylosuccinate synthetase family. In terms of assembly, homodimer. The cofactor is Mg(2+).

The protein localises to the cytoplasm. The enzyme catalyses IMP + L-aspartate + GTP = N(6)-(1,2-dicarboxyethyl)-AMP + GDP + phosphate + 2 H(+). It functions in the pathway purine metabolism; AMP biosynthesis via de novo pathway; AMP from IMP: step 1/2. Functionally, plays an important role in the de novo pathway of purine nucleotide biosynthesis. Catalyzes the first committed step in the biosynthesis of AMP from IMP. The protein is Adenylosuccinate synthetase of Salmonella agona (strain SL483).